Consider the following 88-residue polypeptide: Cell division topological specificity factor (88 aa).

The protein belongs to the MinE family.

Its function is as follows. Prevents the cell division inhibition by proteins MinC and MinD at internal division sites while permitting inhibition at polar sites. This ensures cell division at the proper site by restricting the formation of a division septum at the midpoint of the long axis of the cell. The chain is Cell division topological specificity factor from Clostridium novyi (strain NT).